Consider the following 196-residue polypeptide: MLDCRAIILLWLLPWATQGLAVPRSSSPDWAQCQQLSRNLCTLAWSAHTPVGQMDLLREEGEEETKSDVPRIQCGDGCDPQGLKDNSQFCLQRIRQGLVFYKHLLDSDIFTGEPSLLPDSPVDQLHTSLLGLSQLLQPEDHHWETQQMPRLSPSQQWQRSLLRSKILRSLQAFLAIAARVFAHGAATLTEPLVPTA.

Positions methionine 1–alanine 21 are cleaved as a signal peptide.

Belongs to the IL-6 superfamily. Heterodimer with IL12B; disulfide-linked. The heterodimer is known as interleukin IL-23. Interacts with IL23R; this interaction enables recruitment of IL12RB1.

Its subcellular location is the secreted. Its function is as follows. Associates with IL12B to form the pro-inflammatory cytokine IL-23 that plays different roles in innate and adaptive immunity. Released by antigen-presenting cells such as dendritic cells or macrophages, binds to a heterodimeric receptor complex composed of IL12RB1 and IL23R to activate JAK2 and TYK2 which then phosphorylate the receptor to form a docking site leading to the phosphorylation of STAT3 and STAT4. This process leads to activation of several pathways including p38 MAPK or NF-kappa-B and promotes the production of pro-inflammatory cytokines such as interleukin-17A/IL17A. In turn, participates in the early and effective intracellular bacterial clearance. Promotes the expansion and survival of T-helper 17 cells, a CD4-positive helper T-cell subset that produces IL-17, as well as other IL-17-producing cells. The chain is Interleukin-23 subunit alpha (Il23a) from Rattus norvegicus (Rat).